The following is a 316-amino-acid chain: MIASALSFIFGGCCSNAYALEALVREFPSSGILITFSQFILITIEGLIYFLLNDVQSLKHPKVPRKRWFVVVVMFFAINVLNNVALGFDISVPVHIILRSSGPLTTMAVGRILAGKRYSSLQIGSVFILTIGVIIATLGNAKDLHLHVESMTRFGIGFTILVITQILGAIMGLVLENTYRIYGSDWRESLFYTHALSLPFFLFLLRPIRSQWNDLFAIHTKGFLNLPSGVWYLCFNTLAQYFCVRGVNALGAETSALTVSVVLNVRKFVSLCLSLILFENEMGPAVKFGALLVFGSSAVYASARSKPKTNGLKKND.

The Cytoplasmic portion of the chain corresponds to 1-3 (MIA). The helical transmembrane segment at 4-24 (SALSFIFGGCCSNAYALEALV) threads the bilayer. Topologically, residues 25-31 (REFPSSG) are lumenal. Residues 32–52 (ILITFSQFILITIEGLIYFLL) form a helical membrane-spanning segment. Topologically, residues 53–67 (NDVQSLKHPKVPRKR) are cytoplasmic. The chain crosses the membrane as a helical span at residues 68-88 (WFVVVVMFFAINVLNNVALGF). The Lumenal portion of the chain corresponds to 89-120 (DISVPVHIILRSSGPLTTMAVGRILAGKRYSS). A helical transmembrane segment spans residues 121-141 (LQIGSVFILTIGVIIATLGNA). The Cytoplasmic portion of the chain corresponds to 142–153 (KDLHLHVESMTR). The chain crosses the membrane as a helical span at residues 154–174 (FGIGFTILVITQILGAIMGLV). Topologically, residues 175–187 (LENTYRIYGSDWR) are lumenal. Residues 188–208 (ESLFYTHALSLPFFLFLLRPI) form a helical membrane-spanning segment. Over 209-214 (RSQWND) the chain is Cytoplasmic. Residues 215–235 (LFAIHTKGFLNLPSGVWYLCF) traverse the membrane as a helical segment. Over 236–274 (NTLAQYFCVRGVNALGAETSALTVSVVLNVRKFVSLCLS) the chain is Lumenal. The helical transmembrane segment at 275–295 (LILFENEMGPAVKFGALLVFG) threads the bilayer. The Cytoplasmic segment spans residues 296-316 (SSAVYASARSKPKTNGLKKND).

Belongs to the nucleotide-sugar transporter family. SLC35B subfamily.

Its subcellular location is the endoplasmic reticulum. It is found in the endoplasmic reticulum membrane. Its function is as follows. Sugar transporter that specifically mediates the transport of UDP-N-acetylglucosamine (UDP-GlcNAc) and is required for cell wall chitin synthesis. In Schizosaccharomyces pombe (strain 972 / ATCC 24843) (Fission yeast), this protein is UDP-N-acetylglucosamine transporter yea4 (yea4).